The chain runs to 602 residues: Elongation factor 4 (602 aa).

The tr-type G domain occupies 7 to 189 (KYIRNFSIVA…AIVNKVPAPE (183 aa)). Residues 19 to 24 (DHGKST) and 136 to 139 (NKID) contribute to the GTP site.

It belongs to the TRAFAC class translation factor GTPase superfamily. Classic translation factor GTPase family. LepA subfamily.

Its subcellular location is the cell membrane. The enzyme catalyses GTP + H2O = GDP + phosphate + H(+). Functionally, required for accurate and efficient protein synthesis under certain stress conditions. May act as a fidelity factor of the translation reaction, by catalyzing a one-codon backward translocation of tRNAs on improperly translocated ribosomes. Back-translocation proceeds from a post-translocation (POST) complex to a pre-translocation (PRE) complex, thus giving elongation factor G a second chance to translocate the tRNAs correctly. Binds to ribosomes in a GTP-dependent manner. In Clostridium botulinum (strain Okra / Type B1), this protein is Elongation factor 4.